Consider the following 75-residue polypeptide: Protein SlyX homolog (75 aa).

This sequence belongs to the SlyX family.

This Vibrio campbellii (strain ATCC BAA-1116) protein is Protein SlyX homolog.